Reading from the N-terminus, the 250-residue chain is Petrobactin import ATP-binding protein FatE (250 aa).

One can recognise an ABC transporter domain in the interval 2–236 (IKIDNVKKFY…TLLTDIFETR (235 aa)). An ATP-binding site is contributed by 34 to 41 (GPNGAGKS).

The protein belongs to the ABC transporter superfamily. In terms of assembly, the complex is composed of two ATP-binding proteins (FatE), two transmembrane proteins (FatC and FatD) and a solute-binding protein (FpuA).

It is found in the cell membrane. The catalysed reaction is a Fe(III)-siderophore(out) + ATP + H2O = a Fe(III)-siderophore(in) + ADP + phosphate + H(+). Functionally, part of an ABC transporter complex involved in ferric-petrobactin uptake. Probably responsible for energy coupling to the transport system. The chain is Petrobactin import ATP-binding protein FatE from Bacillus anthracis.